A 256-amino-acid polypeptide reads, in one-letter code: Trypsin epsilon (256 aa).

The first 22 residues, 1 to 22 (MLKIAVLLSVLACALAGTIPDG), serve as a signal peptide directing secretion. The propeptide at 23 to 30 (LLPQLDGR) is activation peptide. One can recognise a Peptidase S1 domain in the interval 31-254 (IVGGYETSID…FHEWIERTAR (224 aa)). Cysteine 56 and cysteine 72 are oxidised to a cystine. Active-site charge relay system residues include histidine 71 and aspartate 116. 2 disulfides stabilise this stretch: cysteine 180/cysteine 197 and cysteine 206/cysteine 230. Serine 210 acts as the Charge relay system in catalysis.

This sequence belongs to the peptidase S1 family.

It localises to the secreted. Its subcellular location is the extracellular space. The enzyme catalyses Preferential cleavage: Arg-|-Xaa, Lys-|-Xaa.. The chain is Trypsin epsilon (epsilonTry) from Drosophila erecta (Fruit fly).